Consider the following 478-residue polypeptide: Chromosomal replication initiator protein DnaA (478 aa).

Positions 1-95 (MNKTLNPQEV…DVLEKEITEE (95 aa)) are domain I, interacts with DnaA modulators. Residues 96–141 (INDLVQSMEEEDFALIDHTKPVIPNFFDQNTRVNFGGGPNNHHPTT) form a domain II region. Residues 142-358 (GVNPRFTFDN…GALLRIFALA (217 aa)) are domain III, AAA+ region. Residues glycine 186, glycine 188, lysine 189, and threonine 190 each contribute to the ATP site. A domain IV, binds dsDNA region spans residues 359 to 478 (SFNKEEINMT…YKLTQFILRR (120 aa)).

Belongs to the DnaA family. In terms of assembly, oligomerizes as a right-handed, spiral filament on DNA at oriC.

The protein localises to the cytoplasm. Plays an essential role in the initiation and regulation of chromosomal replication. ATP-DnaA binds to the origin of replication (oriC) to initiate formation of the DNA replication initiation complex once per cell cycle. Binds the DnaA box (a 9 base pair repeat at the origin) and separates the double-stranded (ds)DNA. Forms a right-handed helical filament on oriC DNA; dsDNA binds to the exterior of the filament while single-stranded (ss)DNA is stabiized in the filament's interior. The ATP-DnaA-oriC complex binds and stabilizes one strand of the AT-rich DNA unwinding element (DUE), permitting loading of DNA polymerase. After initiation quickly degrades to an ADP-DnaA complex that is not apt for DNA replication. Binds acidic phospholipids. The protein is Chromosomal replication initiator protein DnaA of Tropheryma whipplei (strain TW08/27) (Whipple's bacillus).